The chain runs to 62 residues: Large ribosomal subunit protein bL32 (62 aa).

A compositionally biased stretch (basic residues) spans 1-16 (MAVPKRKTSPSRRGMR). Positions 1 to 62 (MAVPKRKTSP…QILKPKTAEV (62 aa)) are disordered. The span at 28-44 (VEDKDSGELRRPHHLDL) shows a compositional bias: basic and acidic residues.

It belongs to the bacterial ribosomal protein bL32 family.

In Azorhizobium caulinodans (strain ATCC 43989 / DSM 5975 / JCM 20966 / LMG 6465 / NBRC 14845 / NCIMB 13405 / ORS 571), this protein is Large ribosomal subunit protein bL32.